Here is a 172-residue protein sequence, read N- to C-terminus: Ferritin-2 heavy chain (172 aa).

The Ferritin-like diiron domain occupies 8-157; sequence QSFATECENA…DYLTETQRVG (150 aa). 5 residues coordinate Fe cation: Glu25, Glu60, His63, Glu105, and Gln139.

Belongs to the ferritin family. In terms of assembly, oligomer of 24 subunits. The functional molecule forms a roughly spherical shell with a diameter of 12 nm and contains a central cavity into which the insoluble mineral iron core is deposited.

It catalyses the reaction 4 Fe(2+) + O2 + 4 H(+) = 4 Fe(3+) + 2 H2O. Stores iron in a soluble, non-toxic, readily available form. Important for iron homeostasis. Has ferroxidase activity. Iron is taken up in the ferrous form and deposited as ferric hydroxides after oxidation. In Schistosoma mansoni (Blood fluke), this protein is Ferritin-2 heavy chain (SCM-2).